The following is a 146-amino-acid chain: Large-conductance mechanosensitive channel (146 aa).

The next 3 membrane-spanning stretches (helical) occupy residues Val21–Ile41, Ile44–Gly64, and Gly83–Val103.

This sequence belongs to the MscL family. Homopentamer.

It is found in the cell inner membrane. Channel that opens in response to stretch forces in the membrane lipid bilayer. May participate in the regulation of osmotic pressure changes within the cell. This chain is Large-conductance mechanosensitive channel, found in Cereibacter sphaeroides (strain ATCC 17029 / ATH 2.4.9) (Rhodobacter sphaeroides).